The primary structure comprises 818 residues: G-type lectin S-receptor-like serine/threonine-protein kinase At1g67520 (818 aa).

A signal peptide spans 1-22 (MCSNGIFVSLLTLSLLLGKSCS). At 23–387 (ETDTLHQGQF…NENKKVAAWH (365 aa)) the chain is on the extracellular side. Residues 24–149 (TDTLHQGQFL…DADGSMKRVL (126 aa)) enclose the Bulb-type lectin domain. 3 N-linked (GlcNAc...) asparagine glycosylation sites follow: asparagine 123, asparagine 199, and asparagine 337. One can recognise a PAN domain in the interval 290-379 (CLAAGYVVRD…PRTIYIRGNE (90 aa)). 2 cysteine pairs are disulfide-bonded: cysteine 330-cysteine 353 and cysteine 334-cysteine 340. The helical transmembrane segment at 388–408 (IVVATLFLMTPIIWFIIYLVL) threads the bilayer. At 409–818 (RKFNVKGRNC…SITITVLEAR (410 aa)) the chain is on the cytoplasmic side. The Protein kinase domain maps to 496–785 (FSDENKLGEG…ALSLPKEPAF (290 aa)). Residues 502-510 (LGEGGFGPV) and lysine 524 each bind ATP. Serine 530 carries the phosphoserine modification. The interval 585–602 (LRKNVLDWTLRFRIMEGI) is caM-binding. The active-site Proton acceptor is aspartate 621. Serine 625 and serine 638 each carry phosphoserine. Threonine 655 bears the Phosphothreonine mark. Phosphoserine occurs at positions 699 and 807. Threonine 813 carries the phosphothreonine modification.

Belongs to the protein kinase superfamily. Ser/Thr protein kinase family.

It is found in the cell membrane. It catalyses the reaction L-seryl-[protein] + ATP = O-phospho-L-seryl-[protein] + ADP + H(+). It carries out the reaction L-threonyl-[protein] + ATP = O-phospho-L-threonyl-[protein] + ADP + H(+). The sequence is that of G-type lectin S-receptor-like serine/threonine-protein kinase At1g67520 from Arabidopsis thaliana (Mouse-ear cress).